Reading from the N-terminus, the 339-residue chain is MAVVLDLLNKDTRPKLDAPARPRHPEKAHRPDTAIQRKPDWIRVKAPGSKLWAETKDIVRANNLVTVCEEAGCPNIGECWEKRHATFMIMGDTCTRACSFCNVRTGLPAALDEAEPEKVAEAVAKLGLHHVVVTSVDRDDLKDGGAEHFSRTIAAIRRASPGTTVEILTPDFLRKPGALEVVVAAKPDVFNHNMETVPGKYVTVRPGARYFHSVRLLQRVKELDPTIFTKSGIMVGLGEERNEVVQLMDDLRSAEVDFLTIGQYLQPTRKHHEVVRFVPPDEFKAYETTAYAKGFLLVSATPLTRSSHHAGEDFARLKAARLAKLGPAPVAASIRAVNA.

The tract at residues 13-35 (RPKLDAPARPRHPEKAHRPDTAI) is disordered. [4Fe-4S] cluster is bound by residues C68, C73, C79, C94, C98, C101, and S307. A Radical SAM core domain is found at 80–296 (WEKRHATFMI…ETTAYAKGFL (217 aa)).

This sequence belongs to the radical SAM superfamily. Lipoyl synthase family. [4Fe-4S] cluster is required as a cofactor.

It is found in the cytoplasm. It carries out the reaction [[Fe-S] cluster scaffold protein carrying a second [4Fe-4S](2+) cluster] + N(6)-octanoyl-L-lysyl-[protein] + 2 oxidized [2Fe-2S]-[ferredoxin] + 2 S-adenosyl-L-methionine + 4 H(+) = [[Fe-S] cluster scaffold protein] + N(6)-[(R)-dihydrolipoyl]-L-lysyl-[protein] + 4 Fe(3+) + 2 hydrogen sulfide + 2 5'-deoxyadenosine + 2 L-methionine + 2 reduced [2Fe-2S]-[ferredoxin]. The protein operates within protein modification; protein lipoylation via endogenous pathway; protein N(6)-(lipoyl)lysine from octanoyl-[acyl-carrier-protein]: step 2/2. In terms of biological role, catalyzes the radical-mediated insertion of two sulfur atoms into the C-6 and C-8 positions of the octanoyl moiety bound to the lipoyl domains of lipoate-dependent enzymes, thereby converting the octanoylated domains into lipoylated derivatives. The sequence is that of Lipoyl synthase from Methylorubrum extorquens (strain CM4 / NCIMB 13688) (Methylobacterium extorquens).